Consider the following 232-residue polypeptide: Phosphatidylserine decarboxylase proenzyme (232 aa).

The active-site Schiff-base intermediate with substrate; via pyruvic acid is serine 190. Serine 190 is subject to Pyruvic acid (Ser); by autocatalysis.

It belongs to the phosphatidylserine decarboxylase family. PSD-A subfamily. Heterodimer of a large membrane-associated beta subunit and a small pyruvoyl-containing alpha subunit. Pyruvate is required as a cofactor. In terms of processing, is synthesized initially as an inactive proenzyme. Formation of the active enzyme involves a self-maturation process in which the active site pyruvoyl group is generated from an internal serine residue via an autocatalytic post-translational modification. Two non-identical subunits are generated from the proenzyme in this reaction, and the pyruvate is formed at the N-terminus of the alpha chain, which is derived from the carboxyl end of the proenzyme. The post-translation cleavage follows an unusual pathway, termed non-hydrolytic serinolysis, in which the side chain hydroxyl group of the serine supplies its oxygen atom to form the C-terminus of the beta chain, while the remainder of the serine residue undergoes an oxidative deamination to produce ammonia and the pyruvoyl prosthetic group on the alpha chain.

It localises to the cell membrane. It catalyses the reaction a 1,2-diacyl-sn-glycero-3-phospho-L-serine + H(+) = a 1,2-diacyl-sn-glycero-3-phosphoethanolamine + CO2. Its pathway is phospholipid metabolism; phosphatidylethanolamine biosynthesis; phosphatidylethanolamine from CDP-diacylglycerol: step 2/2. Functionally, catalyzes the formation of phosphatidylethanolamine (PtdEtn) from phosphatidylserine (PtdSer). The polypeptide is Phosphatidylserine decarboxylase proenzyme (Agrobacterium fabrum (strain C58 / ATCC 33970) (Agrobacterium tumefaciens (strain C58))).